The primary structure comprises 434 residues: Glutamyl-tRNA reductase (434 aa).

Substrate contacts are provided by residues 52–55 (TCNR), Ser115, 120–122 (ETQ), and Gln126. Catalysis depends on Cys53, which acts as the Nucleophile. Residue 195–200 (GAGEMI) participates in NADP(+) binding.

It belongs to the glutamyl-tRNA reductase family. In terms of assembly, homodimer.

The enzyme catalyses (S)-4-amino-5-oxopentanoate + tRNA(Glu) + NADP(+) = L-glutamyl-tRNA(Glu) + NADPH + H(+). Its pathway is porphyrin-containing compound metabolism; protoporphyrin-IX biosynthesis; 5-aminolevulinate from L-glutamyl-tRNA(Glu): step 1/2. Functionally, catalyzes the NADPH-dependent reduction of glutamyl-tRNA(Glu) to glutamate 1-semialdehyde (GSA). This is Glutamyl-tRNA reductase from Cupriavidus pinatubonensis (strain JMP 134 / LMG 1197) (Cupriavidus necator (strain JMP 134)).